Reading from the N-terminus, the 249-residue chain is Type III pantothenate kinase (249 aa).

6–13 (DVGNTHTT) contacts ATP. Position 101–104 (101–104 (GADR)) interacts with substrate. Aspartate 103 acts as the Proton acceptor in catalysis. A K(+)-binding site is contributed by aspartate 123. Threonine 126 serves as a coordination point for ATP. Position 177 (threonine 177) interacts with substrate.

This sequence belongs to the type III pantothenate kinase family. Homodimer. NH4(+) serves as cofactor. Requires K(+) as cofactor.

It is found in the cytoplasm. The enzyme catalyses (R)-pantothenate + ATP = (R)-4'-phosphopantothenate + ADP + H(+). It functions in the pathway cofactor biosynthesis; coenzyme A biosynthesis; CoA from (R)-pantothenate: step 1/5. In terms of biological role, catalyzes the phosphorylation of pantothenate (Pan), the first step in CoA biosynthesis. This chain is Type III pantothenate kinase, found in Thermosipho africanus (strain TCF52B).